The chain runs to 128 residues: Large ribosomal subunit protein mL55 (128 aa).

The N-terminal 33 residues, 1 to 33 (MAAVGSLLGRLRQSTVKATGPALRRLHTSSWRA), are a transit peptide targeting the mitochondrion. Serine 85 is subject to Phosphoserine.

This sequence belongs to the mitochondrion-specific ribosomal protein mL55 family. In terms of assembly, component of the mitochondrial large ribosomal subunit (mt-LSU). Mature mammalian 55S mitochondrial ribosomes consist of a small (28S) and a large (39S) subunit. The 28S small subunit contains a 12S ribosomal RNA (12S mt-rRNA) and 30 different proteins. The 39S large subunit contains a 16S rRNA (16S mt-rRNA), a copy of mitochondrial valine transfer RNA (mt-tRNA(Val)), which plays an integral structural role, and 52 different proteins.

It localises to the mitochondrion. This chain is Large ribosomal subunit protein mL55 (MRPL55), found in Homo sapiens (Human).